A 202-amino-acid polypeptide reads, in one-letter code: Apolipoprotein R (202 aa).

A signal peptide spans 1–28; the sequence is MPPNLQRIFPALCLLGVLFLLHCTPVLC. Sushi domains follow at residues 29-87 and 88-145; these read GCDN…QCKA and LCPK…KCEW. 4 disulfide bridges follow: Cys-30-Cys-73, Cys-59-Cys-85, Cys-89-Cys-130, and Cys-116-Cys-143.

In terms of assembly, forms high molecular weight disulfide-linked complexes. As to expression, plasma. Found on very low-density lipoprotein (VLDL), on chylomicrons, and in the D &gt; 1.21 g/ml fraction of pig plasma. Found in liver, spleen, lung, bone marrow and lymph node.

The protein localises to the secreted. Functionally, may be a lipoprotein-borne regulator of either the coagulation or the complement cascades. This is Apolipoprotein R (APOR) from Sus scrofa (Pig).